A 286-amino-acid polypeptide reads, in one-letter code: NAD kinase (286 aa).

D74 functions as the Proton acceptor in the catalytic mechanism. NAD(+)-binding positions include 74-75 (DG), 148-149 (ND), D178, A186, 189-194 (TAYNLS), and Q244.

It belongs to the NAD kinase family. A divalent metal cation serves as cofactor.

Its subcellular location is the cytoplasm. It carries out the reaction NAD(+) + ATP = ADP + NADP(+) + H(+). Its function is as follows. Involved in the regulation of the intracellular balance of NAD and NADP, and is a key enzyme in the biosynthesis of NADP. Catalyzes specifically the phosphorylation on 2'-hydroxyl of the adenosine moiety of NAD to yield NADP. The sequence is that of NAD kinase from Campylobacter jejuni subsp. jejuni serotype O:2 (strain ATCC 700819 / NCTC 11168).